A 304-amino-acid polypeptide reads, in one-letter code: Large ribosomal subunit protein uL18 (304 aa).

The tract at residues 285–304 (LNALNSSAGADDDDEEEDDE) is disordered. Positions 294-304 (ADDDDEEEDDE) are enriched in acidic residues.

The protein belongs to the universal ribosomal protein uL18 family. In terms of assembly, component of the large ribosomal subunit (LSU).

The protein resides in the cytoplasm. It is found in the nucleus. Functionally, component of the ribosome, a large ribonucleoprotein complex responsible for the synthesis of proteins in the cell. The small ribosomal subunit (SSU) binds messenger RNAs (mRNAs) and translates the encoded message by selecting cognate aminoacyl-transfer RNA (tRNA) molecules. The large subunit (LSU) contains the ribosomal catalytic site termed the peptidyl transferase center (PTC), which catalyzes the formation of peptide bonds, thereby polymerizing the amino acids delivered by tRNAs into a polypeptide chain. The nascent polypeptides leave the ribosome through a tunnel in the LSU and interact with protein factors that function in enzymatic processing, targeting, and the membrane insertion of nascent chains at the exit of the ribosomal tunnel. In Oryza sativa subsp. indica (Rice), this protein is Large ribosomal subunit protein uL18 (RPL5A).